The chain runs to 903 residues: HTH-type transcriptional regulator MalT (903 aa).

ATP is bound at residue 39–46 (CPAGYGKT). One can recognise an HTH luxR-type domain in the interval 832 to 897 (ELIRTSPLTQ…DAVQQAQRLL (66 aa)). A DNA-binding region (H-T-H motif) is located at residues 856 to 875 (NDQIAGELEVAATTIKTHIR).

This sequence belongs to the MalT family. Monomer in solution. Oligomerizes to an active state in the presence of the positive effectors ATP and maltotriose.

Its activity is regulated as follows. Activated by ATP and maltotriose, which are both required for DNA binding. Functionally, positively regulates the transcription of the maltose regulon whose gene products are responsible for uptake and catabolism of malto-oligosaccharides. Specifically binds to the promoter region of its target genes, recognizing a short DNA motif called the MalT box. The chain is HTH-type transcriptional regulator MalT from Yersinia enterocolitica serotype O:8 / biotype 1B (strain NCTC 13174 / 8081).